Consider the following 393-residue polypeptide: 8-amino-7-oxononanoate synthase (393 aa).

Arg-18 lines the substrate pocket. 105–106 contacts pyridoxal 5'-phosphate; it reads GY. His-130 contributes to the substrate binding site. The pyridoxal 5'-phosphate site is built by Ser-178, His-206, and Thr-234. At Lys-237 the chain carries N6-(pyridoxal phosphate)lysine. Thr-353 contacts substrate.

This sequence belongs to the class-II pyridoxal-phosphate-dependent aminotransferase family. BioF subfamily. In terms of assembly, homodimer. Requires pyridoxal 5'-phosphate as cofactor.

It carries out the reaction 6-carboxyhexanoyl-[ACP] + L-alanine + H(+) = (8S)-8-amino-7-oxononanoate + holo-[ACP] + CO2. It participates in cofactor biosynthesis; biotin biosynthesis. In terms of biological role, catalyzes the decarboxylative condensation of pimeloyl-[acyl-carrier protein] and L-alanine to produce 8-amino-7-oxononanoate (AON), [acyl-carrier protein], and carbon dioxide. The polypeptide is 8-amino-7-oxononanoate synthase (Geotalea daltonii (strain DSM 22248 / JCM 15807 / FRC-32) (Geobacter daltonii)).